Reading from the N-terminus, the 319-residue chain is Ferrochelatase (319 aa).

Positions 192 and 271 each coordinate Fe cation.

This sequence belongs to the ferrochelatase family.

It is found in the cytoplasm. The catalysed reaction is heme b + 2 H(+) = protoporphyrin IX + Fe(2+). It participates in porphyrin-containing compound metabolism; protoheme biosynthesis; protoheme from protoporphyrin-IX: step 1/1. Catalyzes the ferrous insertion into protoporphyrin IX. This Geotalea daltonii (strain DSM 22248 / JCM 15807 / FRC-32) (Geobacter daltonii) protein is Ferrochelatase.